A 377-amino-acid chain; its full sequence is N-acetyldiaminopimelate deacetylase (377 aa).

Residue aspartate 69 is part of the active site. The active-site Proton acceptor is the glutamate 128.

This sequence belongs to the peptidase M20A family. N-acetyldiaminopimelate deacetylase subfamily.

It catalyses the reaction N-acetyl-(2S,6S)-2,6-diaminopimelate + H2O = (2S,6S)-2,6-diaminopimelate + acetate. Its pathway is amino-acid biosynthesis; L-lysine biosynthesis via DAP pathway; LL-2,6-diaminopimelate from (S)-tetrahydrodipicolinate (acetylase route): step 3/3. Its function is as follows. Catalyzes the conversion of N-acetyl-diaminopimelate to diaminopimelate and acetate. In Streptococcus gordonii (strain Challis / ATCC 35105 / BCRC 15272 / CH1 / DL1 / V288), this protein is N-acetyldiaminopimelate deacetylase.